The sequence spans 158 residues: MDLASEITSATQTSSLCSSGRGHAGYPAPGIVAHGFETHGTARVAQGHLLPPCLLPPPQMPVLAALRDLSRRGSTSSSRSPSRPVSTSASKPCLPASCLGETWSISINLVGSSGHLQSPGAQRDAQRETGCLGPSWLPHHQGRDEELSLSHSAQGEEF.

Positions 1 to 18 (MDLASEITSATQTSSLCS) are enriched in polar residues. 3 disordered regions span residues 1-20 (MDLA…CSSG), 66-94 (LRDL…KPCL), and 111-158 (GSSG…GEEF). A compositionally biased stretch (low complexity) spans 72–90 (RGSTSSSRSPSRPVSTSAS). 2 stretches are compositionally biased toward polar residues: residues 111 to 120 (GSSGHLQSPG) and 149 to 158 (LSHSAQGEEF).

This is an uncharacterized protein from Homo sapiens (Human).